A 44-amino-acid chain; its full sequence is Peptide Hact-4 (44 aa).

Cystine bridges form between cysteine 8–cysteine 42, cysteine 15–cysteine 34, and cysteine 20–cysteine 43.

In terms of tissue distribution, expressed in tentacles.

The protein localises to the nematocyst. It localises to the secreted. Its function is as follows. Peptide with unknown function. Does not exhibit antimicrobial activity against Escherichia coli and Staphylococcus aureus. Does not exhibit any effect on human ion channel TRPV1 in a Xenopus laevis oocytes assay. This is Peptide Hact-4 from Heliofungia actiniformis (Mushroom coral).